A 680-amino-acid polypeptide reads, in one-letter code: SH3 domain-binding protein 1 (680 aa).

Over residues 1 to 11 the composition is skewed to basic residues; that stretch reads MMKRQLHRMRQ. 2 disordered regions span residues 1–24 and 160–184; these read MMKRQLHRMRQLAHTGSSGRTPET and SQAAKNSGSNQGLGGASGSHTHTTT. The interval 1–275 is interaction with CGNL1; it reads MMKRQLHRMR…TAAPFSRVYG (275 aa). Residues 81–262 enclose the BAR domain; the sequence is MAESFKELDP…RDNHSQADHS (182 aa). Residues 160-169 show a composition bias toward polar residues; sequence SQAAKNSGSN. S241 and S262 each carry phosphoserine. The Rho-GAP domain occupies 276 to 469; sequence VSLRTHLQDL…ALIQNADTLF (194 aa). The interaction with CD2AP stretch occupies residues 470–680; sequence PGDINFNVSG…RPRGLISETE (211 aa). A disordered region spans residues 488–680; that stretch reads EKVSSQQVSE…RPRGLISETE (193 aa). Residues 502 to 516 show a composition bias toward pro residues; sequence VTVPAPATTPAPTPA. S535 bears the Phosphoserine mark. Residues 536–546 show a composition bias toward polar residues; that stretch reads PKVSRNPTETA. Pro residues predominate over residues 561–571; it reads PARPTMPPPQP. S582 carries the phosphoserine modification. Position 592 is a phosphothreonine (T592). Residues 607 to 616 carry the SH3-binding motif; sequence APTMPPPLPP. Over residues 609 to 621 the composition is skewed to pro residues; that stretch reads TMPPPLPPVPPQP. Position 632 is a phosphoserine (S632). Positions 660-671 are enriched in pro residues; it reads HPPPPALPPQPR.

As to quaternary structure, interacts with RAC1. Interacts with the exocyst via EXOC4 and EXOC8; required for the localization of both SH3BP1 and the exocyst to the leading edge of migrating cells. Interacts with CD2AP and CGNL1; probably part of a complex at cell junctions. Interacts with CAPZA1; recruits CAPZA1 to forming cell junctions. May interact with AFDN. Interacts with PLXND1; they dissociate upon SEMA3E binding to PLXND1 allowing SH3BP1 to transduce downstream signal through RAC1 inactivation. Interacts with ABL1, GRB2 and SRC (via SH3 domain). In terms of tissue distribution, expressed in all tissues examined. Highest levels found in spleen and brain, lowest in heart and liver.

The protein localises to the cell projection. It localises to the cell junction. It is found in the tight junction. The protein resides in the adherens junction. Its subcellular location is the phagocytic cup. The protein localises to the nucleus. It localises to the cytoplasm. It is found in the cytosol. Functionally, GTPase activating protein (GAP) which specifically converts GTP-bound Rho-type GTPases including RAC1 and CDC42 in their inactive GDP-bound form. By specifically inactivating RAC1 at the leading edge of migrating cells, it regulates the spatiotemporal organization of cell protrusions which is important for proper cell migration. Also negatively regulates CDC42 in the process of actin remodeling and the formation of epithelial cell junctions. Through its GAP activity toward RAC1 and/or CDC42 plays a specific role in phagocytosis of large particles. Specifically recruited by a PI3 kinase/PI3K-dependent mechanism to sites of large particles engagement, inactivates RAC1 and/or CDC42 allowing the reorganization of the underlying actin cytoskeleton required for engulfment. It also plays a role in angiogenesis and the process of repulsive guidance as part of a semaphorin-plexin signaling pathway. Following the binding of PLXND1 to extracellular SEMA3E it dissociates from PLXND1 and inactivates RAC1, inducing the intracellular reorganization of the actin cytoskeleton and the collapse of cells. This Mus musculus (Mouse) protein is SH3 domain-binding protein 1.